The following is a 329-amino-acid chain: Probable nicotianamine synthase 7 (329 aa).

It belongs to the nicotianamine synthase (NAS)-like family.

The enzyme catalyses 3 S-adenosyl-L-methionine = nicotianamine + 3 S-methyl-5'-thioadenosine + 3 H(+). Its function is as follows. Synthesizes nicotianamine, a polyamine that is the first intermediate in the synthesis of the phytosiderophores of the mugineic acid type found in gramineae which serves as a sensor for the physiological iron status within the plant, and/or might be involved in the transport of iron. The protein is Probable nicotianamine synthase 7 (NAS7) of Hordeum vulgare (Barley).